The chain runs to 510 residues: GMP synthase [glutamine-hydrolyzing] (510 aa).

The Glutamine amidotransferase type-1 domain maps to 3–194 (QILILDFGSQ…ARVICGYKEK (192 aa)). Residue cysteine 80 is the Nucleophile of the active site. Active-site residues include histidine 168 and glutamate 170. Residues 195–385 (WTPASIMTAS…LGLGSEIVDI (191 aa)) form the GMPS ATP-PPase domain. 222 to 228 (SGGVDSS) lines the ATP pocket.

In terms of assembly, homodimer.

It catalyses the reaction XMP + L-glutamine + ATP + H2O = GMP + L-glutamate + AMP + diphosphate + 2 H(+). It functions in the pathway purine metabolism; GMP biosynthesis; GMP from XMP (L-Gln route): step 1/1. Its function is as follows. Catalyzes the synthesis of GMP from XMP. In Elusimicrobium minutum (strain Pei191), this protein is GMP synthase [glutamine-hydrolyzing].